Reading from the N-terminus, the 153-residue chain is uncharacterized protein (153 aa).

2 helical membrane passes run 1–21 (MAATPAAIEVSLTIVFVLFFS) and 106–126 (IVPIPFYCISKAQECFLTVYI).

The protein resides in the membrane. This is an uncharacterized protein from Saccharomyces cerevisiae (strain ATCC 204508 / S288c) (Baker's yeast).